We begin with the raw amino-acid sequence, 333 residues long: Glycerol-3-phosphate dehydrogenase [NAD(P)+] (333 aa).

Positions 11, 34, and 107 each coordinate NADPH. Residues K107, G136, and S138 each contribute to the sn-glycerol 3-phosphate site. Position 140 (A140) interacts with NADPH. The sn-glycerol 3-phosphate site is built by K191, D244, S254, R255, and N256. Catalysis depends on K191, which acts as the Proton acceptor. R255 provides a ligand contact to NADPH. Residues I279 and E281 each contribute to the NADPH site.

This sequence belongs to the NAD-dependent glycerol-3-phosphate dehydrogenase family.

It is found in the cytoplasm. It carries out the reaction sn-glycerol 3-phosphate + NAD(+) = dihydroxyacetone phosphate + NADH + H(+). It catalyses the reaction sn-glycerol 3-phosphate + NADP(+) = dihydroxyacetone phosphate + NADPH + H(+). Its pathway is membrane lipid metabolism; glycerophospholipid metabolism. Catalyzes the reduction of the glycolytic intermediate dihydroxyacetone phosphate (DHAP) to sn-glycerol 3-phosphate (G3P), the key precursor for phospholipid synthesis. This is Glycerol-3-phosphate dehydrogenase [NAD(P)+] from Nitrosospira multiformis (strain ATCC 25196 / NCIMB 11849 / C 71).